Reading from the N-terminus, the 168-residue chain is Troponin I, cardiac muscle (168 aa).

Residues 128-147 (VRKDDAEKESREVGDWRKNV) are compositionally biased toward basic and acidic residues. The tract at residues 128 to 168 (VRKDDAEKESREVGDWRKNVDALSGMEGRKKKFEAPGGGQG) is disordered.

This sequence belongs to the troponin I family. Binds to actin and tropomyosin.

In terms of biological role, troponin I is the inhibitory subunit of troponin, the thin filament regulatory complex which confers calcium-sensitivity to striated muscle actomyosin ATPase activity. This chain is Troponin I, cardiac muscle (TNNI3), found in Gallus gallus (Chicken).